The following is a 601-amino-acid chain: Protein NRT1/ PTR FAMILY 4.4 (601 aa).

Transmembrane regions (helical) follow at residues Ala44 to Asn64 and Ala82 to Leu102. Thr112 carries the phosphothreonine modification. 10 consecutive transmembrane segments (helical) span residues Met113–Leu133, Thr160–Ile180, Phe198–Val218, Val228–Thr248, Ile337–Gln357, Ala386–Leu406, Leu420–Val440, Val453–Phe473, Phe493–Val513, and His544–Ser564.

Belongs to the major facilitator superfamily. Proton-dependent oligopeptide transporter (POT/PTR) (TC 2.A.17) family. In terms of tissue distribution, expressed in shoots, roots and stems.

Its subcellular location is the membrane. This chain is Protein NRT1/ PTR FAMILY 4.4 (NPF4.4), found in Arabidopsis thaliana (Mouse-ear cress).